The chain runs to 688 residues: Polyribonucleotide nucleotidyltransferase (688 aa).

Residues aspartate 484 and aspartate 490 each contribute to the Mg(2+) site. The 60-residue stretch at 550–609 (PTTEIFNVAPDKIVEIIGQGGRVIKEIVEKFEVKIDLNKPSGEVKIMGNKERVLKTKEFI) folds into the KH domain. An S1 motif domain is found at 626–688 (DEVLEAQVKR…NKGKIALDLA (63 aa)).

The protein belongs to the polyribonucleotide nucleotidyltransferase family. Mg(2+) is required as a cofactor.

It localises to the cytoplasm. It catalyses the reaction RNA(n+1) + phosphate = RNA(n) + a ribonucleoside 5'-diphosphate. Involved in mRNA degradation. Catalyzes the phosphorolysis of single-stranded polyribonucleotides processively in the 3'- to 5'-direction. This Helicobacter pylori (strain P12) protein is Polyribonucleotide nucleotidyltransferase.